A 323-amino-acid chain; its full sequence is Oxidation resistance protein 1 (323 aa).

2 stretches are compositionally biased toward polar residues: residues 1–14 and 40–49; these read MVTD…SSLV and RQTSPSSMEY. The segment at 1 to 81 is disordered; sequence MVTDKTNASS…SLPPLSQLSL (81 aa). Residues 51–69 are compositionally biased toward basic and acidic residues; that stretch reads ESDKKKDGPMENEQSKGVR. Residues 71–81 show a composition bias toward low complexity; sequence SSLPPLSQLSL. Residues 91–320 enclose the TLDc domain; the sequence is RLLDDELASN…IMGLELWRVG (230 aa).

It belongs to the OXR1 family.

It localises to the mitochondrion. Functionally, may be involved in protection from oxidative damage. The sequence is that of Oxidation resistance protein 1 (OXR1) from Debaryomyces hansenii (strain ATCC 36239 / CBS 767 / BCRC 21394 / JCM 1990 / NBRC 0083 / IGC 2968) (Yeast).